The chain runs to 305 residues: NAD kinase (305 aa).

The Proton acceptor role is filled by aspartate 84. Residues 84–85 (DG), 159–160 (NE), histidine 170, arginine 187, aspartate 189, 200–205 (TAYSLS), and glutamine 260 each bind NAD(+).

The protein belongs to the NAD kinase family. The cofactor is a divalent metal cation.

The protein resides in the cytoplasm. The catalysed reaction is NAD(+) + ATP = ADP + NADP(+) + H(+). Involved in the regulation of the intracellular balance of NAD and NADP, and is a key enzyme in the biosynthesis of NADP. Catalyzes specifically the phosphorylation on 2'-hydroxyl of the adenosine moiety of NAD to yield NADP. The chain is NAD kinase from Pasteurella multocida (strain Pm70).